Consider the following 328-residue polypeptide: Malate dehydrogenase (328 aa).

NAD(+) is bound at residue 13 to 19 (GGKGQIA). Substrate-binding residues include Arg-94 and Arg-100. Residues Asn-107, Gln-114, and 131 to 133 (VGN) each bind NAD(+). Substrate is bound by residues Asn-133 and Arg-164. Catalysis depends on His-189, which acts as the Proton acceptor.

Belongs to the LDH/MDH superfamily. MDH type 2 family.

It carries out the reaction (S)-malate + NAD(+) = oxaloacetate + NADH + H(+). Its function is as follows. Catalyzes the reversible oxidation of malate to oxaloacetate. In Chlamydia pneumoniae (Chlamydophila pneumoniae), this protein is Malate dehydrogenase.